A 570-amino-acid chain; its full sequence is Sulfite reductase [NADPH] hemoprotein beta-component (570 aa).

[4Fe-4S] cluster-binding residues include Cys-434, Cys-440, Cys-479, and Cys-483. Cys-483 lines the siroheme pocket.

It belongs to the nitrite and sulfite reductase 4Fe-4S domain family. Alpha(8)-beta(8). The alpha component is a flavoprotein, the beta component is a hemoprotein. Requires siroheme as cofactor. [4Fe-4S] cluster is required as a cofactor.

It carries out the reaction hydrogen sulfide + 3 NADP(+) + 3 H2O = sulfite + 3 NADPH + 4 H(+). The protein operates within sulfur metabolism; hydrogen sulfide biosynthesis; hydrogen sulfide from sulfite (NADPH route): step 1/1. In terms of biological role, component of the sulfite reductase complex that catalyzes the 6-electron reduction of sulfite to sulfide. This is one of several activities required for the biosynthesis of L-cysteine from sulfate. The sequence is that of Sulfite reductase [NADPH] hemoprotein beta-component from Salmonella schwarzengrund (strain CVM19633).